Reading from the N-terminus, the 39-residue chain is SYSMEHFRWGKPMGRKRRPIKVYPNSFEDESVENMGPEL.

At Met-13 the chain carries Methionine amide.

It belongs to the POMC family.

Its subcellular location is the secreted. In terms of biological role, precursor protein for pituitary hormones that regulate stress and environmental adaptation. Its function is as follows. Stimulates the adrenal glands to release cortisol. Anorexigenic peptide. Increases the pigmentation of skin by increasing melanin production in melanocytes. In Squalus acanthias (Spiny dogfish), this protein is Pro-opiomelanocortin (pomc).